Reading from the N-terminus, the 190-residue chain is Probable nicotinate-nucleotide adenylyltransferase (190 aa).

The protein belongs to the NadD family.

The catalysed reaction is nicotinate beta-D-ribonucleotide + ATP + H(+) = deamido-NAD(+) + diphosphate. The protein operates within cofactor biosynthesis; NAD(+) biosynthesis; deamido-NAD(+) from nicotinate D-ribonucleotide: step 1/1. In terms of biological role, catalyzes the reversible adenylation of nicotinate mononucleotide (NaMN) to nicotinic acid adenine dinucleotide (NaAD). In Staphylococcus saprophyticus subsp. saprophyticus (strain ATCC 15305 / DSM 20229 / NCIMB 8711 / NCTC 7292 / S-41), this protein is Probable nicotinate-nucleotide adenylyltransferase.